A 260-amino-acid polypeptide reads, in one-letter code: Tetraspanin-14 (260 aa).

At 1–10 (MKSQSHKPWN) the chain is on the cytoplasmic side. A helical transmembrane segment spans residues 11-31 (LVAGIFFPIITFFLSAPLVGH). Residues 32–54 (ALYLFCMRNDHVYYRDFQSTLPR) lie on the Extracellular side of the membrane. Residues 55-75 (VQTLVSVSLLALFLLSNIGMF) form a helical membrane-spanning segment. Residues 76–80 (LRPRR) lie on the Cytoplasmic side of the membrane. A helical transmembrane segment spans residues 81-101 (LSYFLVIVFFIGFAYSGVYKM). At 102 to 260 (ESRRFSPTPM…FLSSLTSLFR (159 aa)) the chain is on the extracellular side. A glycan (N-linked (GlcNAc...) asparagine) is linked at asparagine 182.

This sequence belongs to the tetraspanin (TM4SF) family.

The protein localises to the membrane. Its function is as follows. May be involved in the regulation of cell differentiation. This Arabidopsis thaliana (Mouse-ear cress) protein is Tetraspanin-14 (TET14).